The sequence spans 902 residues: Viral-enhancing factor (902 aa).

In terms of domain architecture, Peptidase M60 spans 27–330 (HRRTEVGVVL…IFAWLYNPQR (304 aa)). Asparagine 73, asparagine 265, asparagine 278, asparagine 339, asparagine 540, asparagine 593, asparagine 594, asparagine 620, asparagine 782, and asparagine 840 each carry an N-linked (GlcNAc...) asparagine; by host glycan.

In terms of biological role, involved in disruption of the peritrophic membrane and fusion of nucleocapsids with midgut cells. This Heliothis (HaGV) protein is Viral-enhancing factor (VEF).